Reading from the N-terminus, the 492-residue chain is N-succinylglutamate 5-semialdehyde dehydrogenase (492 aa).

Residue 220 to 225 (GSASTG) coordinates NAD(+). Residues glutamate 243 and cysteine 277 contribute to the active site.

This sequence belongs to the aldehyde dehydrogenase family. AstD subfamily.

The enzyme catalyses N-succinyl-L-glutamate 5-semialdehyde + NAD(+) + H2O = N-succinyl-L-glutamate + NADH + 2 H(+). Its pathway is amino-acid degradation; L-arginine degradation via AST pathway; L-glutamate and succinate from L-arginine: step 4/5. In terms of biological role, catalyzes the NAD-dependent reduction of succinylglutamate semialdehyde into succinylglutamate. The protein is N-succinylglutamate 5-semialdehyde dehydrogenase of Salmonella gallinarum (strain 287/91 / NCTC 13346).